The following is an 83-amino-acid chain: Mu-theraphotoxin-Hhn2j 4 (83 aa).

A signal peptide spans 1–21 (MKASMFLALAGLVLLFVVGYA). The propeptide occupies 22–48 (SESEEKEFPIELLSKIFAVDVFKGEGR). 3 disulfide bridges follow: C50–C65, C57–C70, and C64–C77. L81 carries the post-translational modification Leucine amide.

It belongs to the neurotoxin 10 (Hwtx-1) family. 15 (Hntx-3) subfamily. As to quaternary structure, monomer. As to expression, expressed by the venom gland.

The protein localises to the secreted. Its function is as follows. Lethal neurotoxin. Selectively blocks tetrodotoxin-sensitive voltage-gated sodium channels (Nav). Does not affect tetrodotoxin-resistant voltage-gated sodium channels or calcium channels. The chain is Mu-theraphotoxin-Hhn2j 4 from Cyriopagopus hainanus (Chinese bird spider).